The chain runs to 293 residues: Pseudouridine-5'-phosphate glycosidase (293 aa).

The active-site Proton donor is glutamate 21. Substrate is bound by residues lysine 81 and valine 101. Aspartate 130 is a binding site for Mn(2+). 132–134 (SQD) is a binding site for substrate. Lysine 151 acts as the Nucleophile in catalysis.

Belongs to the pseudouridine-5'-phosphate glycosidase family. As to quaternary structure, homotrimer. Mn(2+) serves as cofactor.

It carries out the reaction D-ribose 5-phosphate + uracil = psi-UMP + H2O. Functionally, catalyzes the reversible cleavage of pseudouridine 5'-phosphate (PsiMP) to ribose 5-phosphate and uracil. Functions biologically in the cleavage direction, as part of a pseudouridine degradation pathway. The protein is Pseudouridine-5'-phosphate glycosidase of Thermosipho africanus (strain TCF52B).